Here is a 486-residue protein sequence, read N- to C-terminus: Betaine aldehyde dehydrogenase (486 aa).

K(+) contacts are provided by threonine 23 and aspartate 90. 147-149 (GAW) contacts NAD(+). Lysine 159 (charge relay system) is an active-site residue. Residues 173-176 (KPSE) and 226-229 (ESGT) each bind NAD(+). Leucine 241 is a binding site for K(+). The Proton acceptor role is filled by glutamate 247. NAD(+) contacts are provided by glycine 249, cysteine 281, and glutamate 382. The active-site Nucleophile is the cysteine 281. Position 281 is a cysteine sulfenic acid (-SOH) (cysteine 281). Residues lysine 452 and glycine 455 each contribute to the K(+) site. Glutamate 459 serves as the catalytic Charge relay system.

The protein belongs to the aldehyde dehydrogenase family. As to quaternary structure, dimer of dimers. K(+) is required as a cofactor.

The catalysed reaction is betaine aldehyde + NAD(+) + H2O = glycine betaine + NADH + 2 H(+). It functions in the pathway amine and polyamine biosynthesis; betaine biosynthesis via choline pathway; betaine from betaine aldehyde: step 1/1. Its function is as follows. Involved in the biosynthesis of the osmoprotectant glycine betaine. Catalyzes the irreversible oxidation of betaine aldehyde to the corresponding acid. This chain is Betaine aldehyde dehydrogenase, found in Vibrio campbellii (strain ATCC BAA-1116).